The primary structure comprises 259 residues: LOB domain-containing protein CRL1 (259 aa).

Positions 6 to 108 (SPCGACKFLR…AQLASLKAAA (103 aa)) constitute an LOB domain.

This sequence belongs to the LOB domain-containing protein family. In terms of assembly, can form homodimers. In terms of tissue distribution, expressed in unelongating basal internodes, at the base of shoot in parenchyma cells adjacent to the peripheral vascular cylinder of the stem, and root pericycle cells. Expressed in lateral and adventitious root primordia, tiller primordia, vascular tissues, scutellum, and young pedicels.

It is found in the nucleus. Its function is as follows. Acts as a positive regulator of adventitious (crown) root formation by promoting its initiation. Acts as a positive regulator of lateral root formation. Regulated by the auxin response factor and transcriptional activator ARF23/ARF1. Involved in auxin-mediated cell dedifferentiation, and may promote the initial cell division in the pericycle cells adjacent to the peripheral vascular cylinder at the base of the stem. May act upstream of the gene regulatory network controlling adventitious root (crown) development. This is LOB domain-containing protein CRL1 from Oryza sativa subsp. japonica (Rice).